A 121-amino-acid polypeptide reads, in one-letter code: Large ribosomal subunit protein bL12 (121 aa).

Belongs to the bacterial ribosomal protein bL12 family. As to quaternary structure, homodimer. Part of the ribosomal stalk of the 50S ribosomal subunit. Forms a multimeric L10(L12)X complex, where L10 forms an elongated spine to which 2 to 4 L12 dimers bind in a sequential fashion. Binds GTP-bound translation factors.

Its function is as follows. Forms part of the ribosomal stalk which helps the ribosome interact with GTP-bound translation factors. Is thus essential for accurate translation. The polypeptide is Large ribosomal subunit protein bL12 (Pectobacterium atrosepticum (strain SCRI 1043 / ATCC BAA-672) (Erwinia carotovora subsp. atroseptica)).